Here is a 333-residue protein sequence, read N- to C-terminus: L-lactate dehydrogenase B chain (333 aa).

Residues 29–57 and Arg-99 contribute to the NAD(+) site; that span reads GQVG…LEDK. Positions 106, 138, and 169 each coordinate substrate. Asn-138 lines the NAD(+) pocket. His-193 acts as the Proton acceptor in catalysis. Thr-248 contributes to the substrate binding site.

It belongs to the LDH/MDH superfamily. LDH family. In terms of assembly, homotetramer.

Its subcellular location is the cytoplasm. It catalyses the reaction (S)-lactate + NAD(+) = pyruvate + NADH + H(+). The protein operates within fermentation; pyruvate fermentation to lactate; (S)-lactate from pyruvate: step 1/1. Its function is as follows. Interconverts simultaneously and stereospecifically pyruvate and lactate with concomitant interconversion of NADH and NAD(+). In Pelodiscus sinensis japonicus (Chinese soft-shelled turtle), this protein is L-lactate dehydrogenase B chain (LDHB).